The following is a 336-amino-acid chain: Glyceraldehyde-3-phosphate dehydrogenase (336 aa).

NAD(+)-binding positions include 12 to 13, Asp34, Arg78, and Thr121; that span reads RI. D-glyceraldehyde 3-phosphate is bound by residues 151-153, Thr182, Arg199, 212-213, and Arg235; these read SCT and TG. The active-site Nucleophile is Cys152. Asn316 is an NAD(+) binding site.

It belongs to the glyceraldehyde-3-phosphate dehydrogenase family. Homotetramer.

The protein resides in the cytoplasm. The catalysed reaction is D-glyceraldehyde 3-phosphate + phosphate + NAD(+) = (2R)-3-phospho-glyceroyl phosphate + NADH + H(+). The protein operates within carbohydrate degradation; glycolysis; pyruvate from D-glyceraldehyde 3-phosphate: step 1/5. Functionally, catalyzes the oxidative phosphorylation of glyceraldehyde 3-phosphate (G3P) to 1,3-bisphosphoglycerate (BPG) using the cofactor NAD. The first reaction step involves the formation of a hemiacetal intermediate between G3P and a cysteine residue, and this hemiacetal intermediate is then oxidized to a thioester, with concomitant reduction of NAD to NADH. The reduced NADH is then exchanged with the second NAD, and the thioester is attacked by a nucleophilic inorganic phosphate to produce BPG. In Streptococcus pyogenes serotype M1, this protein is Glyceraldehyde-3-phosphate dehydrogenase (gap).